A 126-amino-acid chain; its full sequence is Holo-[acyl-carrier-protein] synthase (126 aa).

Mg(2+)-binding residues include D9 and E58.

It belongs to the P-Pant transferase superfamily. AcpS family. The cofactor is Mg(2+).

The protein localises to the cytoplasm. The catalysed reaction is apo-[ACP] + CoA = holo-[ACP] + adenosine 3',5'-bisphosphate + H(+). Transfers the 4'-phosphopantetheine moiety from coenzyme A to a Ser of acyl-carrier-protein. The polypeptide is Holo-[acyl-carrier-protein] synthase (Escherichia coli O139:H28 (strain E24377A / ETEC)).